The sequence spans 408 residues: Dual-specificity RNA methyltransferase RlmN (408 aa).

Glutamate 93 (proton acceptor) is an active-site residue. The region spanning glutamate 99–aspartate 379 is the Radical SAM core domain. The cysteines at positions 106 and 384 are disulfide-linked. Residues cysteine 113, cysteine 117, and cysteine 120 each contribute to the [4Fe-4S] cluster site. The interval serine 152–histidine 196 is disordered. A compositionally biased stretch (basic and acidic residues) spans lysine 157–aspartate 178. S-adenosyl-L-methionine is bound by residues glycine 210–glutamate 211, serine 242, serine 264–histidine 266, and asparagine 341. The active-site S-methylcysteine intermediate is cysteine 384.

This sequence belongs to the radical SAM superfamily. RlmN family. It depends on [4Fe-4S] cluster as a cofactor.

Its subcellular location is the cytoplasm. The catalysed reaction is adenosine(2503) in 23S rRNA + 2 reduced [2Fe-2S]-[ferredoxin] + 2 S-adenosyl-L-methionine = 2-methyladenosine(2503) in 23S rRNA + 5'-deoxyadenosine + L-methionine + 2 oxidized [2Fe-2S]-[ferredoxin] + S-adenosyl-L-homocysteine. The enzyme catalyses adenosine(37) in tRNA + 2 reduced [2Fe-2S]-[ferredoxin] + 2 S-adenosyl-L-methionine = 2-methyladenosine(37) in tRNA + 5'-deoxyadenosine + L-methionine + 2 oxidized [2Fe-2S]-[ferredoxin] + S-adenosyl-L-homocysteine. Functionally, specifically methylates position 2 of adenine 2503 in 23S rRNA and position 2 of adenine 37 in tRNAs. m2A2503 modification seems to play a crucial role in the proofreading step occurring at the peptidyl transferase center and thus would serve to optimize ribosomal fidelity. The polypeptide is Dual-specificity RNA methyltransferase RlmN (Aromatoleum aromaticum (strain DSM 19018 / LMG 30748 / EbN1) (Azoarcus sp. (strain EbN1))).